The primary structure comprises 181 residues: Ubiquitin-conjugating enzyme E2 19 (181 aa).

Positions 1–10 are enriched in polar residues; sequence MATVNGYTGN. The segment at 1–33 is disordered; that stretch reads MATVNGYTGNTPAATTPAATGSKQSAPPTKTVD. The span at 11 to 20 shows a compositional bias: low complexity; that stretch reads TPAATTPAAT. Positions 36–181 constitute a UBC core domain; sequence SVLKRLQSEL…VEKLYKPLNA (146 aa). Catalysis depends on cysteine 120, which acts as the Glycyl thioester intermediate.

This sequence belongs to the ubiquitin-conjugating enzyme family. In terms of assembly, interacts with OR. Binds to LOT1. In terms of tissue distribution, expressed in all tissues with cell division activities and in mature leaves.

It is found in the cytoplasm. Its subcellular location is the nucleus. It carries out the reaction S-ubiquitinyl-[E1 ubiquitin-activating enzyme]-L-cysteine + [E2 ubiquitin-conjugating enzyme]-L-cysteine = [E1 ubiquitin-activating enzyme]-L-cysteine + S-ubiquitinyl-[E2 ubiquitin-conjugating enzyme]-L-cysteine.. It participates in protein modification; protein ubiquitination. Functionally, accepts the ubiquitin from the E1 complex and catalyzes its covalent attachment to other proteins. Part of the anaphase-promoting complex (APC). May have a key function during cell cycle and be involved in cyclin B1 degradation. Triggers OR ubiquitination that mediates its subsequent nuclear localization. Involved in the repression of early light-induced proteins (ELIPs, e.g. ELIP1 and ELIP2) expression, probably via OR nuclear relocalization. This Arabidopsis thaliana (Mouse-ear cress) protein is Ubiquitin-conjugating enzyme E2 19.